The sequence spans 211 residues: Pyridoxine/pyridoxamine 5'-phosphate oxidase (211 aa).

Residues 7 to 10 (RTDY) and Lys-65 each bind substrate. Residues 60–65 (RIVLIK), 75–76 (FT), Arg-81, and Lys-82 contribute to the FMN site. Positions 122, 126, and 130 each coordinate substrate. FMN-binding positions include 139-140 (QS) and Trp-183. Position 189-191 (189-191 (RLH)) interacts with substrate. Arg-193 is an FMN binding site.

The protein belongs to the pyridoxamine 5'-phosphate oxidase family. In terms of assembly, homodimer. It depends on FMN as a cofactor.

The enzyme catalyses pyridoxamine 5'-phosphate + O2 + H2O = pyridoxal 5'-phosphate + H2O2 + NH4(+). It carries out the reaction pyridoxine 5'-phosphate + O2 = pyridoxal 5'-phosphate + H2O2. Its pathway is cofactor metabolism; pyridoxal 5'-phosphate salvage; pyridoxal 5'-phosphate from pyridoxamine 5'-phosphate: step 1/1. It functions in the pathway cofactor metabolism; pyridoxal 5'-phosphate salvage; pyridoxal 5'-phosphate from pyridoxine 5'-phosphate: step 1/1. Its function is as follows. Catalyzes the oxidation of either pyridoxine 5'-phosphate (PNP) or pyridoxamine 5'-phosphate (PMP) into pyridoxal 5'-phosphate (PLP). This chain is Pyridoxine/pyridoxamine 5'-phosphate oxidase, found in Herminiimonas arsenicoxydans.